Reading from the N-terminus, the 165-residue chain is Lipoprotein signal peptidase (165 aa).

The next 3 helical transmembrane spans lie at serine 6–isoleucine 26, glycine 68–phenylalanine 88, and isoleucine 95–isoleucine 115. Catalysis depends on residues aspartate 125 and aspartate 141. The chain crosses the membrane as a helical span at residues isoleucine 132 to isoleucine 152.

The protein belongs to the peptidase A8 family.

The protein localises to the cell inner membrane. The enzyme catalyses Release of signal peptides from bacterial membrane prolipoproteins. Hydrolyzes -Xaa-Yaa-Zaa-|-(S,diacylglyceryl)Cys-, in which Xaa is hydrophobic (preferably Leu), and Yaa (Ala or Ser) and Zaa (Gly or Ala) have small, neutral side chains.. Its pathway is protein modification; lipoprotein biosynthesis (signal peptide cleavage). This protein specifically catalyzes the removal of signal peptides from prolipoproteins. This chain is Lipoprotein signal peptidase, found in Fusobacterium nucleatum subsp. nucleatum (strain ATCC 25586 / DSM 15643 / BCRC 10681 / CIP 101130 / JCM 8532 / KCTC 2640 / LMG 13131 / VPI 4355).